The chain runs to 129 residues: L-ectoine synthase (129 aa).

Belongs to the ectoine synthase family.

The catalysed reaction is (2S)-4-acetamido-2-aminobutanoate = L-ectoine + H2O. The protein operates within amine and polyamine biosynthesis; ectoine biosynthesis; L-ectoine from L-aspartate 4-semialdehyde: step 3/3. In terms of biological role, catalyzes the circularization of gamma-N-acetyl-alpha,gamma-diaminobutyric acid (ADABA) to ectoine (1,4,5,6-tetrahydro-2-methyl-4-pyrimidine carboxylic acid), which is an excellent osmoprotectant. This Desulfosudis oleivorans (strain DSM 6200 / JCM 39069 / Hxd3) (Desulfococcus oleovorans) protein is L-ectoine synthase.